The chain runs to 189 residues: UPF0340 protein SAG0103 (189 aa).

Belongs to the UPF0340 family.

In Streptococcus agalactiae serotype V (strain ATCC BAA-611 / 2603 V/R), this protein is UPF0340 protein SAG0103.